Consider the following 299-residue polypeptide: Very long chain fatty acid elongase 5 (299 aa).

Met1 carries the post-translational modification N-acetylmethionine. 7 helical membrane passes run 26-46, 64-84, 112-132, 139-158, 168-187, 205-225, and 226-246; these read WFLL…LLIV, ILVV…CELV, VLWW…FFIL, ITVL…WFVM, FGAT…YGLS, GQLL…IWPC, and TFPL…ITLF. The residue at position 285 (Ser285) is a Phosphoserine.

This sequence belongs to the ELO family. ELOVL5 subfamily. As to quaternary structure, interacts with TECR.

It localises to the endoplasmic reticulum membrane. The protein resides in the cell projection. It is found in the dendrite. The enzyme catalyses a very-long-chain acyl-CoA + malonyl-CoA + H(+) = a very-long-chain 3-oxoacyl-CoA + CO2 + CoA. The catalysed reaction is (6Z,9Z,12Z)-octadecatrienoyl-CoA + malonyl-CoA + H(+) = (8Z,11Z,14Z)-3-oxoeicosatrienoyl-CoA + CO2 + CoA. It catalyses the reaction (9Z,12Z,15Z)-octadecatrienoyl-CoA + malonyl-CoA + H(+) = (11Z,14Z,17Z)-3-oxoeicosatrienoyl-CoA + CO2 + CoA. It carries out the reaction (9Z)-hexadecenoyl-CoA + malonyl-CoA + H(+) = 3-oxo-(11Z)-octadecenoyl-CoA + CO2 + CoA. The enzyme catalyses (9Z)-octadecenoyl-CoA + malonyl-CoA + H(+) = 3-oxo-(11Z)-eicosenoyl-CoA + CO2 + CoA. The catalysed reaction is (11Z)-octadecenoyl-CoA + malonyl-CoA + H(+) = 3-oxo-(13Z)-eicosenoyl-CoA + CO2 + CoA. It catalyses the reaction (9Z,12Z)-octadecadienoyl-CoA + malonyl-CoA + H(+) = (11Z,14Z)-3-oxoicosa-11,14-dienoyl-CoA + CO2 + CoA. It carries out the reaction (6Z,9Z,12Z,15Z)-octadecatetraenoyl-CoA + malonyl-CoA + H(+) = (8Z,11Z,14Z,17Z)-3-oxoicosatetraenoyl-CoA + CO2 + CoA. The enzyme catalyses (5Z,8Z,11Z,14Z)-eicosatetraenoyl-CoA + malonyl-CoA + H(+) = (7Z,10Z,13Z,16Z)-3-oxodocosatetraenoyl-CoA + CO2 + CoA. The catalysed reaction is (5Z,8Z,11Z,14Z,17Z)-eicosapentaenoyl-CoA + malonyl-CoA + H(+) = 3-oxo-(7Z,10Z,13Z,16Z,19Z)-docosapentaenoyl-CoA + CO2 + CoA. The protein operates within lipid metabolism; polyunsaturated fatty acid biosynthesis. In terms of biological role, catalyzes the first and rate-limiting reaction of the four reactions that constitute the long-chain fatty acids elongation cycle. This endoplasmic reticulum-bound enzymatic process allows the addition of 2 carbons to the chain of long- and very long-chain fatty acids (VLCFAs) per cycle. Condensing enzyme that acts specifically toward polyunsaturated acyl-CoA with the higher activity toward C18:3(n-6) acyl-CoA. May participate in the production of monounsaturated and of polyunsaturated VLCFAs of different chain lengths that are involved in multiple biological processes as precursors of membrane lipids and lipid mediators. In conditions where the essential linoleic and alpha linoleic fatty acids are lacking it is also involved in the synthesis of Mead acid from oleic acid. This Bos taurus (Bovine) protein is Very long chain fatty acid elongase 5.